We begin with the raw amino-acid sequence, 395 residues long: 8-amino-7-oxononanoate synthase (395 aa).

K24 contributes to the substrate binding site. 111–112 (GF) serves as a coordination point for pyridoxal 5'-phosphate. Substrate is bound at residue H136. Pyridoxal 5'-phosphate is bound by residues S184, 209–212 (DDAH), and 240–243 (TLSK). K243 carries the N6-(pyridoxal phosphate)lysine modification. T357 lines the substrate pocket.

The protein belongs to the class-II pyridoxal-phosphate-dependent aminotransferase family. BioF subfamily. Homodimer. Pyridoxal 5'-phosphate is required as a cofactor.

It carries out the reaction 6-carboxyhexanoyl-[ACP] + L-alanine + H(+) = (8S)-8-amino-7-oxononanoate + holo-[ACP] + CO2. It participates in cofactor biosynthesis; biotin biosynthesis. In terms of biological role, catalyzes the decarboxylative condensation of pimeloyl-[acyl-carrier protein] and L-alanine to produce 8-amino-7-oxononanoate (AON), [acyl-carrier protein], and carbon dioxide. The polypeptide is 8-amino-7-oxononanoate synthase (Treponema denticola (strain ATCC 35405 / DSM 14222 / CIP 103919 / JCM 8153 / KCTC 15104)).